Consider the following 1695-residue polypeptide: MRRHPPLDPTMAPGPEDNVRNLRKRQARGPGTARGCGPEVGGRRKNRQKRRMVAQASPGKDKVERDRSVAASGAEKATRRRVERPRGQVSPSDRRGIQAAKEAELRLQTERHTKEKRKVTEASSDDPQPEIDLVRKESLTSSESFQTVECLQSLSKEGIVEGIKRRRIRNKKLKSLENPPLKVTENEATQNIKVEFQDELYKNTPKYSCNILSPEVENNSILKLHVCNCFPHSKGCNDENNLPYKPDGGCMHVAENSSKLKKENLRSLAEKSDTNSIPRLLQTKESVMGVNKLLLEESDLCQSKTNDLLSCLQREKNKYSIEESSVGRKSRKRIKSEKAVTESETVTEMNFYEYNKSELMLQENKMIADGKEAETKSPLNVLRKVSHNTVSLMDHLLSLPEMVGKETSPEHHVNAVCQKTIEPLLKEETENASEPLGYESMAQTEDFKSMKSSIGKSPNEYHIEKRSSQEELRRESEELKLSCQRTIPMTGKRTWPYYSCARISAWCWKKASLPESSYFLPGSQESCRQDDVLKHQTNQTHLTDSKLLLQSSLTETNIESSSKEKLDSNSNCLSSVSAIEHTLMVMKEPIIEDDKKIKSEELSKSGSEVVSNTTEDTQLISETQILTGNKKKDRGNLTKLNLIATSKDGQEANNSTGRTIHRKSCVAKQTFVAPDLVKILNTGRLTNFKIPLLKNKTEKRKEINAKSSEREAYSPLELLDNLSGAEVRQNRSKESVSMTTSGPQTLSIQNSVTPAQASSDSFYDKNSCSIYPRFTKQDNNNKPSNHISERGNIVSNKEVASLTVENNTFSYDPGYVEKNSFFSCNEQETFQPVSSEVSVRKITKNFSEIKVGSPDILKAYEDDVLLIDVIQDDPDLFGVSNEGELSCTSGVSRISQEPNVAGEDQSADFKYMETPVKKEPSDNLRELSVLDTGSIKSEACASNSAASEIRHDSKDVNTSLGKVANKASENETLEDFSEQIKGSNLDKKHRFTDKVIIKEEKEKIYEVCKSKDSRNADIMVDECQFAAPVPKPLCLLVPPLNLSGHQEETVLNTWTNDFRFLGKHSVLKLQNPATCEIFKREKNVGVLQKSLGLMLPYKYCRFHFNTLRGCERPLCKFVHVPEQGDEKVCMDVFKKYININELCLLQRAVNIFMEYYRKFPPGIHFDLQVLNDLLNSLLKHCLLKEVFQIVNLSIMVKIQPSLKILLNIFEHVATMKLRNAVPALTDIFCKLIEAGMVLDPEHFNYIVKLLYQVQASKQEITAVLEMRSRLQTRLFKKNWKCDLDSALNKLEHCKEKGDWTRLGKLYLNVKMGCEKLADFETFCACIAKTLTKHYEKEGPDVPFCEFAETVSKDPQNSKVDESVLGRIGISALFFYHKLLQWSKGRKVLDKLYELKIHFTSLKGLIGPEMLASRCQIVNVAAEIFLKSGSLNGAIWVMRESEWIINTPLWPCDRLDVLNRHNLLCTIAHDILAKSLFRQAFEVLQNLPGFQNSQETVEVSQYSILFNKLLDSCIESNSLGTSSSVAEFMISKSVPIDFSFLRRLITSLGRSCLWLKARAHYKSALSLGCYPQLEGNLYRKLLLIPSYLSEIEMLLAMEIFMVSNASSIQSPGTSTQILQIVLKRCENNQSQRNDDYQAAVERLIMAARISDPKLFIKHMTVNINKEQVYSLEHCSVLKWLKENMKWAGKVWLFSNH.

Disordered regions lie at residues 1 to 128, 441 to 474, and 725 to 753; these read MRRH…DDPQ, MAQT…ELRR, and AEVR…NSVT. Basic residues predominate over residues 43-52; the sequence is RRKNRQKRRM. Composition is skewed to basic and acidic residues over residues 59–68, 92–113, and 459–474; these read GKDKVERDRS, SDRR…ERHT, and NEYH…ELRR. Over residues 735-753 the composition is skewed to polar residues; the sequence is SVSMTTSGPQTLSIQNSVT.

Its subcellular location is the cytoplasm. The protein resides in the cytosol. Functionally, important for normal spermatogenesis and male fertility. Specifically required for progression to the post-meiotic stages of spermatocyte development. Seems to be necessary for normal expression levels of a number of testis-expressed gene transcripts, although its role in this process is unclear. This is Protein TOPAZ1 (TOPAZ1) from Callithrix jacchus (White-tufted-ear marmoset).